A 339-amino-acid polypeptide reads, in one-letter code: DNA-directed RNA polymerase subunit alpha (339 aa).

The interval methionine 1 to glutamate 233 is alpha N-terminal domain (alpha-NTD). Positions lysine 264–phenylalanine 339 are alpha C-terminal domain (alpha-CTD).

Belongs to the RNA polymerase alpha chain family. As to quaternary structure, in plastids the minimal PEP RNA polymerase catalytic core is composed of four subunits: alpha, beta, beta', and beta''. When a (nuclear-encoded) sigma factor is associated with the core the holoenzyme is formed, which can initiate transcription.

It is found in the plastid. The protein localises to the chloroplast. The enzyme catalyses RNA(n) + a ribonucleoside 5'-triphosphate = RNA(n+1) + diphosphate. Functionally, DNA-dependent RNA polymerase catalyzes the transcription of DNA into RNA using the four ribonucleoside triphosphates as substrates. This chain is DNA-directed RNA polymerase subunit alpha, found in Australopyrum velutinum (Mountain wheat-grass).